The sequence spans 360 residues: Tryptophan--tRNA ligase, mitochondrial (360 aa).

The transit peptide at 1–18 (MALHSMRKARERWSFIRA) directs the protein to the mitochondrion. ATP-binding positions include glutamine 42 and 48 to 51 (HLGN). Aspartate 167 provides a ligand contact to L-tryptophan. Residues 179–181 (GED), valine 217, and 226–230 (KMSKS) contribute to the ATP site.

It belongs to the class-I aminoacyl-tRNA synthetase family. Brain.

The protein localises to the mitochondrion matrix. Its subcellular location is the mitochondrion. The catalysed reaction is tRNA(Trp) + L-tryptophan + ATP = L-tryptophyl-tRNA(Trp) + AMP + diphosphate + H(+). Its function is as follows. Catalyzes the attachment of tryptophan to tRNA(Trp) in a two-step reaction: tryptophan is first activated by ATP to form Trp-AMP and then transferred to the acceptor end of tRNA(Trp). The protein is Tryptophan--tRNA ligase, mitochondrial (WARS2) of Homo sapiens (Human).